A 527-amino-acid polypeptide reads, in one-letter code: L-amino-acid oxidase (527 aa).

The signal sequence occupies residues 1-27 (MDLHRAPWKSSAAAAVLLLALFSGAAA). A disulfide bridge connects residues C37 and C200. N-linked (GlcNAc...) asparagine glycosylation occurs at N58. FAD contacts are provided by residues 70-71 (VA), 90-91 (EA), R98, 114-117 (GAMR), and V288. R117 lines the substrate pocket. N393 carries N-linked (GlcNAc...) asparagine glycosylation. Y403 contacts substrate. FAD contacts are provided by residues E485 and 492-497 (AWMESA). Position 492 to 493 (492 to 493 (AW)) interacts with substrate.

Homodimer. FAD is required as a cofactor. In terms of tissue distribution, expression mainly observed in plasma, spleen, kidney and gills with low levels detected in blood and no expression detected in brain, liver, heart, muscle or intestine (at protein level).

The protein resides in the secreted. The enzyme catalyses an L-alpha-amino acid + O2 + H2O = a 2-oxocarboxylate + H2O2 + NH4(+). Functionally, inhibits the growth of both Gram-negative and Gram-positive bacteria. Displays strong antibacterial activity towards V.cholerae and E.tarda. Causes deformation of the surface of S.aureus and the formation of pores on the surface of E.coli. Strong antiparasitic activity is seen towards C.irritans, T.brucei and I.multifiliis. Cilia of treated theronts are lost and the macronucleus swells, inducing cell membrane rupture and efflux of the cytoplasm. The protein is L-amino-acid oxidase of Siganus canaliculatus (White-spotted spinefoot).